The chain runs to 109 residues: MRFSLAILALPVLAAATAVPRGGASKCNSGPVQCCNTLVDTKDKHQTNIVGALLGLDLGSLTGLAGVNCSPVSVIGVGGNSCSTQTVCCEGTQFNGLVNVGCTPINVGL.

Positions 1-22 (MRFSLAILALPVLAAATAVPRG) are cleaved as a signal peptide. 4 disulfides stabilise this stretch: Cys27/Cys88, Cys34/Cys82, Cys35/Cys69, and Cys89/Cys102.

The protein belongs to the fungal hydrophobin family. In terms of assembly, self-assembles to form functional amyloid fibrils called rodlets. Self-assembly into fibrillar rodlets occurs spontaneously at hydrophobic:hydrophilic interfaces and the rodlets further associate laterally to form amphipathic monolayers.

It is found in the secreted. The protein resides in the cell wall. In terms of biological role, aerial growth, conidiation, and dispersal of filamentous fungi in the environment rely upon a capability of their secreting small amphipathic proteins called hydrophobins (HPBs) with low sequence identity. Class I can self-assemble into an outermost layer of rodlet bundles on aerial cell surfaces, conferring cellular hydrophobicity that supports fungal growth, development and dispersal; whereas Class II form highly ordered films at water-air interfaces through intermolecular interactions but contribute nothing to the rodlet structure. SC1 is a dikaryon-specific class I hydrophobin that contributes to the formation of aerial hyphae and fruiting bodies. The protein is Class I hydrophobin SC1 of Schizophyllum commune (Split gill fungus).